Here is a 603-residue protein sequence, read N- to C-terminus: Elongation factor 4 (603 aa).

One can recognise a tr-type G domain in the interval 7 to 189; that stretch reads SRIRNFSIIA…SIVQLVPPPQ (183 aa). Residues 19–24 and 136–139 contribute to the GTP site; these read DHGKST and NKID.

It belongs to the TRAFAC class translation factor GTPase superfamily. Classic translation factor GTPase family. LepA subfamily.

The protein resides in the cell inner membrane. It catalyses the reaction GTP + H2O = GDP + phosphate + H(+). In terms of biological role, required for accurate and efficient protein synthesis under certain stress conditions. May act as a fidelity factor of the translation reaction, by catalyzing a one-codon backward translocation of tRNAs on improperly translocated ribosomes. Back-translocation proceeds from a post-translocation (POST) complex to a pre-translocation (PRE) complex, thus giving elongation factor G a second chance to translocate the tRNAs correctly. Binds to ribosomes in a GTP-dependent manner. This is Elongation factor 4 from Microcystis aeruginosa (strain NIES-843 / IAM M-2473).